Reading from the N-terminus, the 222-residue chain is Putative N-acetylmannosamine-6-phosphate 2-epimerase (222 aa).

This sequence belongs to the NanE family.

The catalysed reaction is an N-acyl-D-glucosamine 6-phosphate = an N-acyl-D-mannosamine 6-phosphate. It participates in amino-sugar metabolism; N-acetylneuraminate degradation; D-fructose 6-phosphate from N-acetylneuraminate: step 3/5. Functionally, converts N-acetylmannosamine-6-phosphate (ManNAc-6-P) to N-acetylglucosamine-6-phosphate (GlcNAc-6-P). The chain is Putative N-acetylmannosamine-6-phosphate 2-epimerase from Staphylococcus aureus (strain bovine RF122 / ET3-1).